Reading from the N-terminus, the 355-residue chain is Elongation factor Ts, mitochondrial (355 aa).

A mitochondrion-targeting transit peptide spans 1–46; the sequence is MIRSLNFALRNCNKNILINSNKITINNGLLLKKNNFCTQSTSEVKV.

This sequence belongs to the EF-Ts family.

It is found in the mitochondrion. Its function is as follows. Associates with the EF-Tu.GDP complex and induces the exchange of GDP to GTP. It remains bound to the aminoacyl-tRNA.EF-Tu.GTP complex up to the GTP hydrolysis stage on the ribosome. This Dictyostelium discoideum (Social amoeba) protein is Elongation factor Ts, mitochondrial (tsfm).